Here is a 65-residue protein sequence, read N- to C-terminus: Translational regulator CsrA (65 aa).

It belongs to the CsrA/RsmA family. Homodimer; the beta-strands of each monomer intercalate to form a hydrophobic core, while the alpha-helices form wings that extend away from the core.

It localises to the cytoplasm. Its function is as follows. A key translational regulator that binds mRNA to regulate translation initiation and/or mRNA stability. Mediates global changes in gene expression, shifting from rapid growth to stress survival by linking envelope stress, the stringent response and the catabolite repression systems. Usually binds in the 5'-UTR; binding at or near the Shine-Dalgarno sequence prevents ribosome-binding, repressing translation, binding elsewhere in the 5'-UTR can activate translation and/or stabilize the mRNA. Its function is antagonized by small RNA(s). This Pseudomonas putida (strain ATCC 47054 / DSM 6125 / CFBP 8728 / NCIMB 11950 / KT2440) protein is Translational regulator CsrA.